A 279-amino-acid chain; its full sequence is Ribonuclease T2 protein rnst-2 (279 aa).

An N-terminal signal peptide occupies residues 1–17 (MKLLLLLCISCIPLAYS). Residues Cys37 and Cys48 are joined by a disulfide bond. His60 is a catalytic residue. The N-linked (GlcNAc...) asparagine glycan is linked to Asn68. Residues Glu114 and His118 contribute to the active site. Cysteines 200 and 210 form a disulfide.

It belongs to the RNase T2 family. As to expression, expressed in the pharynx, hypodermis, muscle cells, sheath cells, intestinal cells, the vulva and tail regions.

Its subcellular location is the lysosome. It catalyses the reaction a ribonucleotidyl-ribonucleotide-RNA + H2O = a 3'-end 3'-phospho-ribonucleotide-RNA + a 5'-end dephospho-ribonucleoside-RNA + H(+). Its function is as follows. Probable endoribonuclease involved in the autophagy-mediated degradation of ribosomal RNA and ribosomal proteins in lysosomes. The sequence is that of Ribonuclease T2 protein rnst-2 from Caenorhabditis elegans.